A 360-amino-acid chain; its full sequence is Ribosomal RNA small subunit methyltransferase C (360 aa).

Belongs to the methyltransferase superfamily. RsmC family. Monomer.

The protein resides in the cytoplasm. It carries out the reaction guanosine(1207) in 16S rRNA + S-adenosyl-L-methionine = N(2)-methylguanosine(1207) in 16S rRNA + S-adenosyl-L-homocysteine + H(+). Specifically methylates the guanine in position 1207 of 16S rRNA in the 30S particle. The protein is Ribosomal RNA small subunit methyltransferase C of Alteromonas mediterranea (strain DSM 17117 / CIP 110805 / LMG 28347 / Deep ecotype).